A 224-amino-acid chain; its full sequence is NADH-quinone oxidoreductase subunit B (224 aa).

Residues Cys67, Cys68, Cys133, and Cys162 each coordinate [4Fe-4S] cluster. The interval 200-224 (DMPAEKDRKRGERIKVTNLRTPDEI) is disordered. Basic and acidic residues predominate over residues 201 to 224 (MPAEKDRKRGERIKVTNLRTPDEI).

The protein belongs to the complex I 20 kDa subunit family. NDH-1 is composed of 14 different subunits. Subunits NuoB, C, D, E, F, and G constitute the peripheral sector of the complex. [4Fe-4S] cluster is required as a cofactor.

It is found in the cell inner membrane. It carries out the reaction a quinone + NADH + 5 H(+)(in) = a quinol + NAD(+) + 4 H(+)(out). NDH-1 shuttles electrons from NADH, via FMN and iron-sulfur (Fe-S) centers, to quinones in the respiratory chain. The immediate electron acceptor for the enzyme in this species is believed to be ubiquinone. Couples the redox reaction to proton translocation (for every two electrons transferred, four hydrogen ions are translocated across the cytoplasmic membrane), and thus conserves the redox energy in a proton gradient. The sequence is that of NADH-quinone oxidoreductase subunit B from Aeromonas salmonicida (strain A449).